Here is a 614-residue protein sequence, read N- to C-terminus: MQANGAAAAAAGEEPAGSGCLSAHNGESSEPAHSNGVLSSNNGLSGTGSTGPTEQPGGRKKKRLSQADEDVIRLIGQHLHGLGLNQTVDLLMQESGCRLEHPSATKFRNHVMEGEWDKAENDLNELKSLVHSPHAVAACRPSSGGSGSEHSPTSCPTADVIRRMKFLLLQQKYLEYLEDGKVLEALQVLRCELTPLKYNTERIHVLSGYLMCSHADDLRAKAEWEGKGTASRSKLLDKLQTYLPPSVMLPPRRLQTLLRQAVELQRDRCLYHNTKLDNNLDSVSLLIDHVCSRKQFPCFTQQVLTEHCNEVWFCKFSNDGTKLATGSKDTTVIIWQVDPDTHQLKLLKTLEGHAYGVSYLAWSPDDNYLIACGPDDCSELWLWNVQTGELRTKMSQSHEDSLTSVAWNPDGKRFVTGGQRGQFYQCDLDGNLLDSWEGVRVQCLWCLSDGKTVLASDTHQRIRGYNFEDLTDRNIVQEDHPIMSFTISRNGRLALLNVATQGVHLWDLQDRVLVRKYQGVTQGFYTIHSCFGGHNEDFIASGSEDHKVYVWHKRSELPIAELTGHTRTVNCVSWNPQIPSLMASASDDGTVRIWGPAPYVDNQEFEEECSSMNS.

Low complexity-rich tracts occupy residues 1-19 (MQAN…AGSG) and 34-44 (SNGVLSSNNGL). Residues 1 to 65 (MQANGAAAAA…PGGRKKKRLS (65 aa)) form a disordered region. Residues 67-99 (ADEDVIRLIGQHLHGLGLNQTVDLLMQESGCRL) enclose the LisH domain. The CTLH domain maps to 100-184 (EHPSATKFRN…EYLEDGKVLE (85 aa)). 6 WD repeats span residues 306-345 (EHCN…HQLK), 352-391 (GHAY…GELR), 397-437 (SHED…DSWE), 477-516 (QEDH…LVRK), 519-561 (GVTQ…PIAE), and 564-604 (GHTR…DNQE).

Forms homooligomers. Identified in the CTLH complex that contains at least MAEA, RMND5A (or alternatively its paralog RMND5B), GID8, WDR26, and RANBP9 and/or RANBP10. Interacts with DDB1-CUL4A/B E3 ligase complexes.

It is found in the cytoplasm. Its subcellular location is the nucleus. It localises to the mitochondrion. G-beta-like protein involved in cell signal transduction. Acts as a negative regulator in MAPK signaling pathway. Functions as a scaffolding protein to promote G beta:gamma-mediated PLCB2 plasma membrane translocation and subsequent activation in leukocytes. Core component of the CTLH E3 ubiquitin-protein ligase complex that mediates ubiquitination and subsequent proteasomal degradation of target proteins. Acts as a negative regulator of the canonical Wnt signaling pathway through preventing ubiquitination of beta-catenin CTNNB1 by the beta-catenin destruction complex, thus negatively regulating CTNNB1 degradation. Serves as a scaffold to coordinate PI3K/AKT pathway-driven cell growth and migration. Protects cells from oxidative stress-induced apoptosis via the down-regulation of AP-1 transcriptional activity as well as by inhibiting cytochrome c release from mitochondria. Also protects cells by promoting hypoxia-mediated autophagy and mitophagy. This Xenopus tropicalis (Western clawed frog) protein is WD repeat-containing protein 26 (wdr26).